The following is a 471-amino-acid chain: V-type ATP synthase beta chain (471 aa).

It belongs to the ATPase alpha/beta chains family.

Its function is as follows. Produces ATP from ADP in the presence of a proton gradient across the membrane. The V-type beta chain is a regulatory subunit. The protein is V-type ATP synthase beta chain of Streptococcus pyogenes serotype M49 (strain NZ131).